A 123-amino-acid chain; its full sequence is Prismalin-14 (123 aa).

A signal peptide spans 1–16 (MRSLLVLLALAACASA).

In terms of tissue distribution, prismatic layer of shell (at protein level). Expressed primarily in the mantle with highest level in the mantle edge and lower level in the mantle pallium.

Its subcellular location is the secreted. Functionally, may be involved in calcification of the prismatic layer of the shell. In Margaritifera margaritifera (Freshwater pearl mussel), this protein is Prismalin-14.